The chain runs to 329 residues: T-lymphocyte activation antigen CD86 (329 aa).

An N-terminal signal peptide occupies residues 1–23 (MDPQCTMGLSNILFVMAFLLSGA). Topologically, residues 24 to 247 (APLKIQAYFN…DPQPPPDHIP (224 aa)) are extracellular. Asn33, Asn47, Asn135, Asn146, Asn154, Asn177, Asn192, and Asn213 each carry an N-linked (GlcNAc...) asparagine glycan. One can recognise an Ig-like V-type domain in the interval 33–131 (NETADLPCQF…RIHQMNSELS (99 aa)). Cys40 and Cys110 are oxidised to a cystine. One can recognise an Ig-like C2-type domain in the interval 150-225 (NVYINLTCSS…IFCILETDKT (76 aa)). Residues Cys157 and Cys218 are joined by a disulfide bond. Residues 248-268 (WITAVLPTVIICVMVFCLILW) traverse the membrane as a helical segment. Over 269–329 (KWKKKKRPRN…SSCDKSDTCF (61 aa)) the chain is Cytoplasmic. A disordered region spans residues 277 to 329 (RNSYKCGTNTMEREESEQTKKREKIHIPERSDEAQRVFKSSKTSSCDKSDTCF). A compositionally biased stretch (basic and acidic residues) spans 287–312 (MEREESEQTKKREKIHIPERSDEAQR).

In terms of assembly, homodimer. Interacts with MARCH8. Interacts (via cytoplasmic domain) with PHB1 and PHB2; the interactions increases after priming with CD40. Interacts with CD28. (Microbial infection) Interacts with adenovirus subgroup b fiber protein. As to quaternary structure, (Microbial infection) Interacts with Orthopoxvirus OPG038/M2 protein, inhibiting the interaction with CTLA4 and CD28. In terms of processing, polyubiquitinated; which is promoted by MARCH8 and results in endocytosis and lysosomal degradation. As to expression, expressed by activated B-lymphocytes and monocytes.

It localises to the cell membrane. In terms of biological role, receptor involved in the costimulatory signal essential for T-lymphocyte proliferation and interleukin-2 production, by binding CD28 or CTLA-4. May play a critical role in the early events of T-cell activation and costimulation of naive T-cells, such as deciding between immunity and anergy that is made by T-cells within 24 hours after activation. Also involved in the regulation of B cells function, plays a role in regulating the level of IgG(1) produced. Upon CD40 engagement, activates NF-kappa-B signaling pathway via phospholipase C and protein kinase C activation. Its function is as follows. Interferes with the formation of CD86 clusters, and thus acts as a negative regulator of T-cell activation. (Microbial infection) Acts as a receptor for adenovirus subgroup B. This is T-lymphocyte activation antigen CD86 (CD86) from Homo sapiens (Human).